Reading from the N-terminus, the 440-residue chain is Serine hydroxymethyltransferase (440 aa).

(6S)-5,6,7,8-tetrahydrofolate-binding positions include leucine 119 and 123 to 125 (GHL). The residue at position 228 (lysine 228) is an N6-(pyridoxal phosphate)lysine. 370 to 372 (SPF) contributes to the (6S)-5,6,7,8-tetrahydrofolate binding site.

It belongs to the SHMT family. Homodimer. Pyridoxal 5'-phosphate serves as cofactor.

The protein localises to the cytoplasm. It catalyses the reaction (6R)-5,10-methylene-5,6,7,8-tetrahydrofolate + glycine + H2O = (6S)-5,6,7,8-tetrahydrofolate + L-serine. It participates in one-carbon metabolism; tetrahydrofolate interconversion. The protein operates within amino-acid biosynthesis; glycine biosynthesis; glycine from L-serine: step 1/1. Catalyzes the reversible interconversion of serine and glycine with tetrahydrofolate (THF) serving as the one-carbon carrier. This reaction serves as the major source of one-carbon groups required for the biosynthesis of purines, thymidylate, methionine, and other important biomolecules. Also exhibits THF-independent aldolase activity toward beta-hydroxyamino acids, producing glycine and aldehydes, via a retro-aldol mechanism. The polypeptide is Serine hydroxymethyltransferase (Chlorobaculum parvum (strain DSM 263 / NCIMB 8327) (Chlorobium vibrioforme subsp. thiosulfatophilum)).